The primary structure comprises 55 residues: UPF0434 protein Erum1340/ERWE_CDS_01300 (55 aa).

This sequence belongs to the UPF0434 family.

In Ehrlichia ruminantium (strain Welgevonden), this protein is UPF0434 protein Erum1340/ERWE_CDS_01300.